We begin with the raw amino-acid sequence, 452 residues long: Cell division protein FtsZ (452 aa).

Residues 24–28 (GAGSN), 111–113 (GTG), E142, R146, and D190 contribute to the GTP site.

The protein belongs to the FtsZ family. As to quaternary structure, homodimer. Polymerizes to form a dynamic ring structure in a strictly GTP-dependent manner. Interacts directly with several other division proteins.

Its subcellular location is the cytoplasm. Its function is as follows. Essential cell division protein that forms a contractile ring structure (Z ring) at the future cell division site. The regulation of the ring assembly controls the timing and the location of cell division. One of the functions of the FtsZ ring is to recruit other cell division proteins to the septum to produce a new cell wall between the dividing cells. Binds GTP and shows GTPase activity. The protein is Cell division protein FtsZ of Rickettsia felis (strain ATCC VR-1525 / URRWXCal2) (Rickettsia azadi).